Reading from the N-terminus, the 213-residue chain is ATP phosphoribosyltransferase (213 aa).

This sequence belongs to the ATP phosphoribosyltransferase family. Short subfamily. In terms of assembly, heteromultimer composed of HisG and HisZ subunits.

Its subcellular location is the cytoplasm. It catalyses the reaction 1-(5-phospho-beta-D-ribosyl)-ATP + diphosphate = 5-phospho-alpha-D-ribose 1-diphosphate + ATP. It functions in the pathway amino-acid biosynthesis; L-histidine biosynthesis; L-histidine from 5-phospho-alpha-D-ribose 1-diphosphate: step 1/9. Functionally, catalyzes the condensation of ATP and 5-phosphoribose 1-diphosphate to form N'-(5'-phosphoribosyl)-ATP (PR-ATP). Has a crucial role in the pathway because the rate of histidine biosynthesis seems to be controlled primarily by regulation of HisG enzymatic activity. The chain is ATP phosphoribosyltransferase from Saccharophagus degradans (strain 2-40 / ATCC 43961 / DSM 17024).